The following is a 535-amino-acid chain: 2-(3-amino-3-carboxypropyl)histidine synthase subunit 2 (535 aa).

Cysteine 107, cysteine 128, and cysteine 342 together coordinate [4Fe-4S] cluster. A compositionally biased stretch (basic and acidic residues) spans asparagine 390–glutamate 401. Disordered stretches follow at residues asparagine 390 to aspartate 471 and alanine 512 to histidine 535. Residues valine 404–alanine 424 are compositionally biased toward acidic residues. Residues asparagine 449–aspartate 471 show a composition bias toward polar residues.

The protein belongs to the DPH1/DPH2 family. DPH2 subfamily. Component of the 2-(3-amino-3-carboxypropyl)histidine synthase complex composed of DPH1, DPH2, DPH3 and a NADH-dependent reductase, predominantly CBR1. It depends on [4Fe-4S] cluster as a cofactor.

It localises to the cytoplasm. It functions in the pathway protein modification; peptidyl-diphthamide biosynthesis. In terms of biological role, required for the first step of diphthamide biosynthesis, a post-translational modification of histidine which occurs in elongation factor 2. DPH1 and DPH2 transfer a 3-amino-3-carboxypropyl (ACP) group from S-adenosyl-L-methionine (SAM) to a histidine residue, the reaction is assisted by a reduction system comprising DPH3 and a NADH-dependent reductase, predominantly CBR1. Facilitates the reduction of the catalytic iron-sulfur cluster found in the DPH1 subunit. This Gibberella zeae (strain ATCC MYA-4620 / CBS 123657 / FGSC 9075 / NRRL 31084 / PH-1) (Wheat head blight fungus) protein is 2-(3-amino-3-carboxypropyl)histidine synthase subunit 2 (DPH2).